A 214-amino-acid chain; its full sequence is Ras-related protein Rab-11A (214 aa).

GTP is bound by residues 20–28 (GDSGVGKSN), 39–45 (SLETKST), 68–72 (DTAGQ), 126–129 (NKSD), and 156–158 (SAL). The Effector region signature appears at 42-50 (TKSTIGVEF). 2 S-geranylgeranyl cysteine lipidation sites follow: Cys-213 and Cys-214.

Belongs to the small GTPase superfamily. Rab family.

It is found in the contractile vacuole membrane. Functionally, required for normal contractile vacuole structure and function. Cells expressing a dominant negative rab11A exhibit a more extensive contractile vacuole network and enlarged contractile vacuole bladders. These cells exhibit a functional defect in osmotic regulation where cells immersed in water become rounded and detach from the surface, and contain swollen contractile vacuoles. This Dictyostelium discoideum (Social amoeba) protein is Ras-related protein Rab-11A (rab11A).